A 143-amino-acid chain; its full sequence is Endoribonuclease YbeY (143 aa).

Positions 109, 113, and 119 each coordinate Zn(2+).

The protein belongs to the endoribonuclease YbeY family. Zn(2+) is required as a cofactor.

The protein localises to the cytoplasm. Its function is as follows. Single strand-specific metallo-endoribonuclease involved in late-stage 70S ribosome quality control and in maturation of the 3' terminus of the 16S rRNA. The chain is Endoribonuclease YbeY from Carboxydothermus hydrogenoformans (strain ATCC BAA-161 / DSM 6008 / Z-2901).